Here is a 324-residue protein sequence, read N- to C-terminus: MLKASLKSIASYIPEKILSNTDLEKMVDTTDEWIARRTGIKERRIANENENTSDLGTKAALKAIERANLKPEDIDAILVATLSPDYFTMPSTACKIASNLGLVNISAFDISAACSGFIYLLEQAKALVESGLKKNVLIIGAEKTSSIMDYSDRSICILFGDGAGAGVVSLDNENYILDVHTASNGNYGDLLMTQRSQKSSLCQTLSMQMKGNEVFKIAVNTLSNDVVEILAKNNILAQEIDLFIPHQANLRIIKAVQEKLNLSDEKCVITVQKYGNTSAASIPMAMNDAYEEGRLKKGNLILLDAFGGGFTWGSALLKFGGENF.

Active-site residues include Cys-114 and His-246. An ACP-binding region spans residues 247-251; that stretch reads QANLR. Asn-276 is a catalytic residue.

The protein belongs to the thiolase-like superfamily. FabH family. As to quaternary structure, homodimer.

The protein resides in the cytoplasm. It carries out the reaction malonyl-[ACP] + acetyl-CoA + H(+) = 3-oxobutanoyl-[ACP] + CO2 + CoA. It functions in the pathway lipid metabolism; fatty acid biosynthesis. Functionally, catalyzes the condensation reaction of fatty acid synthesis by the addition to an acyl acceptor of two carbons from malonyl-ACP. Catalyzes the first condensation reaction which initiates fatty acid synthesis and may therefore play a role in governing the total rate of fatty acid production. Possesses both acetoacetyl-ACP synthase and acetyl transacylase activities. Its substrate specificity determines the biosynthesis of branched-chain and/or straight-chain of fatty acids. In Campylobacter jejuni subsp. doylei (strain ATCC BAA-1458 / RM4099 / 269.97), this protein is Beta-ketoacyl-[acyl-carrier-protein] synthase III.